Here is a 739-residue protein sequence, read N- to C-terminus: Nucleoprotein (739 aa).

Residues 334 to 363 (VNVGEQYQQLREAATEAEKQLQQYAESREL) adopt a coiled-coil conformation. The interval 415-646 (PKTSGHYDDD…QDSDNTQPEH (232 aa)) is disordered. 2 stretches are compositionally biased toward low complexity: residues 449–458 (SQDTTIPDVV) and 504–514 (KGGQQKNSQKG). Residues 520–530 (RQTQSRPTQNI) are compositionally biased toward polar residues. Acidic residues predominate over residues 567–579 (EEADPLDDADDET). Residues 611–638 (YRDHSEKKELPQDERQDQDHTQEARNQD) are compositionally biased toward basic and acidic residues.

Belongs to the filoviruses nucleoprotein family. In terms of assembly, homooligomer. Homomultimerizes to form the nucleocapsid. Binds to viral genomic RNA. Interacts with VP35 and VP30 to form the nucleocapsid. Interacts with host PPP2R5C; this interaction leads to VP30 dephosphorylation and viral transcription. Interacts with VP24; this interaction facilitates nucleocapsid assembly and genome packaging. Interacts with matrix protein VP40; this interaction allows recruitment of the nucleocapsid into progeny virions. Interacts with host STAU1. Interacts with host NXF1 (via RNA-binding domain); this interaction recruits NXF1 to the inclusion bodies were viral replication takes place, probably to export viral mRNA-NXF1 complexes from these sites. Interacts with host CCDC92; this interaction sequesters NP in the host cytoplasm. Interacts with host TRIM14. Post-translationally, phosphorylated and O-glycosylated by host. Acetylated by host EP300 in vitro.

The protein localises to the virion. It is found in the host cytoplasm. In terms of biological role, oligomerizes into helical capsid to encapsidate the viral genome, protecting it from nucleases and the cellular innate immune response. VP35 binds to and stabilizes monomeric NP, keeping it soluble. Upon virus replication, NP is recruited to bind cooperatively viral genomic RNA and VP35 is released. The encapsidated genomic RNA is termed the nucleocapsid and serves as template for transcription and replication. The nucleocapsid is helical with a pitch of 10.81 NP per turn and a diameter of about 22nm. Each NP binds to six nucleotides of viral genomic RNA, three being exposed to the solvant and three hidden into the nucleocapsid. Also recruits host PPP2R5C phosphatase to dephosphorylate VP30 and thereby promote viral transcription. Upon virion assembly and budding, NP binds to VP24 and possibly host STAU1. The protein is Nucleoprotein (NP) of Zaire ebolavirus (strain Gabon-94) (ZEBOV).